A 377-amino-acid chain; its full sequence is Probable glucokinase 2 (377 aa).

27-32 (CDVGGS) is a binding site for ATP.

Belongs to the bacterial glucokinase family.

The enzyme catalyses D-glucose + ATP = D-glucose 6-phosphate + ADP + H(+). The chain is Probable glucokinase 2 (GK2) from Trichomonas vaginalis.